The chain runs to 128 residues: Calcitonin gene-related peptide 1 (128 aa).

An N-terminal signal peptide occupies residues Met1–Ala25. Residues Ala26–Gln80 constitute a propeptide that is removed on maturation. The tract at residues Glu63–Ser83 is disordered. Polar residues predominate over residues Gly74 to Ser83. A disulfide bridge connects residues Cys84 and Cys89. A Phenylalanine amide modification is found at Phe119. Positions Asp125–Ala128 are excised as a propeptide.

It belongs to the calcitonin family.

It localises to the secreted. Functionally, CGRP1/CALCA is a peptide hormone that induces vasodilation mediated by the CALCRL-RAMP1 receptor complex. Dilates a variety of vessels including the coronary, cerebral and systemic vasculature. Its abundance in the CNS also points toward a neurotransmitter or neuromodulator role. It also elevates platelet cAMP. CGRP1 can also bind and activate CALCR-RAMP1 (AMYR1) receptor complex. The protein is Calcitonin gene-related peptide 1 (CALCA) of Canis lupus familiaris (Dog).